We begin with the raw amino-acid sequence, 429 residues long: Trigger factor (429 aa).

The region spanning glycine 164 to proline 249 is the PPIase FKBP-type domain.

It belongs to the FKBP-type PPIase family. Tig subfamily.

Its subcellular location is the cytoplasm. It catalyses the reaction [protein]-peptidylproline (omega=180) = [protein]-peptidylproline (omega=0). Involved in protein export. Acts as a chaperone by maintaining the newly synthesized protein in an open conformation. Functions as a peptidyl-prolyl cis-trans isomerase. The protein is Trigger factor of Anaeromyxobacter dehalogenans (strain 2CP-C).